The chain runs to 754 residues: Phosphoribosylformylglycinamidine synthase subunit PurL (754 aa).

A disordered region spans residues 1–21 (MLDTVEHAATTPDQPQPYGEL). His54 is an active-site residue. Residues Tyr57 and Lys101 each coordinate ATP. Position 103 (Glu103) interacts with Mg(2+). Substrate contacts are provided by residues 104-107 (SHNH) and Arg126. The active-site Proton acceptor is the His105. Mg(2+) is bound at residue Asp127. Gln252 provides a ligand contact to substrate. Mg(2+) is bound at residue Asp280. 324–326 (ESQ) serves as a coordination point for substrate. ATP is bound by residues Asn512 and Gly549. A Mg(2+)-binding site is contributed by Asn550. Ser552 contributes to the substrate binding site.

This sequence belongs to the FGAMS family. In terms of assembly, monomer. Part of the FGAM synthase complex composed of 1 PurL, 1 PurQ and 2 PurS subunits.

It is found in the cytoplasm. The enzyme catalyses N(2)-formyl-N(1)-(5-phospho-beta-D-ribosyl)glycinamide + L-glutamine + ATP + H2O = 2-formamido-N(1)-(5-O-phospho-beta-D-ribosyl)acetamidine + L-glutamate + ADP + phosphate + H(+). The protein operates within purine metabolism; IMP biosynthesis via de novo pathway; 5-amino-1-(5-phospho-D-ribosyl)imidazole from N(2)-formyl-N(1)-(5-phospho-D-ribosyl)glycinamide: step 1/2. Its function is as follows. Part of the phosphoribosylformylglycinamidine synthase complex involved in the purines biosynthetic pathway. Catalyzes the ATP-dependent conversion of formylglycinamide ribonucleotide (FGAR) and glutamine to yield formylglycinamidine ribonucleotide (FGAM) and glutamate. The FGAM synthase complex is composed of three subunits. PurQ produces an ammonia molecule by converting glutamine to glutamate. PurL transfers the ammonia molecule to FGAR to form FGAM in an ATP-dependent manner. PurS interacts with PurQ and PurL and is thought to assist in the transfer of the ammonia molecule from PurQ to PurL. The protein is Phosphoribosylformylglycinamidine synthase subunit PurL of Mycobacterium bovis (strain ATCC BAA-935 / AF2122/97).